The following is a 153-amino-acid chain: Methylglyoxal synthase (153 aa).

The 151-residue stretch at 3-153 (DQVNRPKGVT…SYLSRDVPGN (151 aa)) folds into the MGS-like domain. Substrate is bound by residues His19, Lys23, 45–48 (TGTT), and 65–66 (SG). The active-site Proton donor/acceptor is the Asp71. His98 provides a ligand contact to substrate.

This sequence belongs to the methylglyoxal synthase family.

The enzyme catalyses dihydroxyacetone phosphate = methylglyoxal + phosphate. Its function is as follows. Catalyzes the formation of methylglyoxal from dihydroxyacetone phosphate. The protein is Methylglyoxal synthase of Hahella chejuensis (strain KCTC 2396).